The following is a 526-amino-acid chain: Na(+)/H(+) antiporter NhaB (526 aa).

11 consecutive transmembrane segments (helical) span residues 14–34 (FLGY…LVNP), 63–83 (CYPL…GMTS), 99–119 (MLLV…LFVF), 122–142 (LLLR…AAAF), 146–166 (FLDA…FYGI), 206–226 (LLMH…VGEP), 239–259 (FVSF…CGIL), 307–327 (AVIG…VGLI), 357–377 (FTAL…QQLF), 451–471 (ATPN…APLI), and 479–499 (VIMA…CVEF).

It belongs to the NhaB Na(+)/H(+) (TC 2.A.34) antiporter family.

Its subcellular location is the cell inner membrane. It catalyses the reaction 2 Na(+)(in) + 3 H(+)(out) = 2 Na(+)(out) + 3 H(+)(in). In terms of biological role, na(+)/H(+) antiporter that extrudes sodium in exchange for external protons. This Pectobacterium carotovorum subsp. carotovorum (strain PC1) protein is Na(+)/H(+) antiporter NhaB.